Reading from the N-terminus, the 141-residue chain is Nucleoside diphosphate kinase (141 aa).

ATP is bound by residues K11, F59, R87, T93, R104, and N114. H117 serves as the catalytic Pros-phosphohistidine intermediate.

It belongs to the NDK family. As to quaternary structure, homotetramer. Mg(2+) is required as a cofactor.

It is found in the cytoplasm. It carries out the reaction a 2'-deoxyribonucleoside 5'-diphosphate + ATP = a 2'-deoxyribonucleoside 5'-triphosphate + ADP. It catalyses the reaction a ribonucleoside 5'-diphosphate + ATP = a ribonucleoside 5'-triphosphate + ADP. Its function is as follows. Major role in the synthesis of nucleoside triphosphates other than ATP. The ATP gamma phosphate is transferred to the NDP beta phosphate via a ping-pong mechanism, using a phosphorylated active-site intermediate. The protein is Nucleoside diphosphate kinase of Paraburkholderia xenovorans (strain LB400).